A 445-amino-acid polypeptide reads, in one-letter code: Tubulin beta-4 chain (445 aa).

Residues 1–4 (MREI) carry the MREI motif motif. Positions 11, 69, 138, 142, 143, 144, 204, and 226 each coordinate GTP. Glutamate 69 provides a ligand contact to Mg(2+). The disordered stretch occupies residues 425–445 (YQDATAEEEGEFEEGEEEENA). The segment covering 429 to 445 (TAEEEGEFEEGEEEENA) has biased composition (acidic residues). Residue glutamate 438 is modified to 5-glutamyl polyglutamate.

This sequence belongs to the tubulin family. Dimer of alpha and beta chains. A typical microtubule is a hollow water-filled tube with an outer diameter of 25 nm and an inner diameter of 15 nM. Alpha-beta heterodimers associate head-to-tail to form protofilaments running lengthwise along the microtubule wall with the beta-tubulin subunit facing the microtubule plus end conferring a structural polarity. Microtubules usually have 13 protofilaments but different protofilament numbers can be found in some organisms and specialized cells. The cofactor is Mg(2+). Some glutamate residues at the C-terminus are polyglycylated, resulting in polyglycine chains on the gamma-carboxyl group. Glycylation is mainly limited to tubulin incorporated into axonemes (cilia and flagella) whereas glutamylation is prevalent in neuronal cells, centrioles, axonemes, and the mitotic spindle. Both modifications can coexist on the same protein on adjacent residues, and lowering polyglycylation levels increases polyglutamylation, and reciprocally. The precise function of polyglycylation is still unclear. Post-translationally, some glutamate residues at the C-terminus are polyglutamylated, resulting in polyglutamate chains on the gamma-carboxyl group. Polyglutamylation plays a key role in microtubule severing by spastin (SPAST). SPAST preferentially recognizes and acts on microtubules decorated with short polyglutamate tails: severing activity by SPAST increases as the number of glutamates per tubulin rises from one to eight, but decreases beyond this glutamylation threshold. In terms of tissue distribution, preferential expression in germ cells.

It localises to the cytoplasm. It is found in the cytoskeleton. Its function is as follows. Tubulin is the major constituent of microtubules, a cylinder consisting of laterally associated linear protofilaments composed of alpha- and beta-tubulin heterodimers. Microtubules grow by the addition of GTP-tubulin dimers to the microtubule end, where a stabilizing cap forms. Below the cap, tubulin dimers are in GDP-bound state, owing to GTPase activity of alpha-tubulin. This chain is Tubulin beta-4 chain (tubb4), found in Xenopus laevis (African clawed frog).